The primary structure comprises 179 residues: Large ribosomal subunit protein uL5 (179 aa).

Belongs to the universal ribosomal protein uL5 family. As to quaternary structure, part of the 50S ribosomal subunit; part of the 5S rRNA/L5/L18/L25 subcomplex. Contacts the 5S rRNA and the P site tRNA. Forms a bridge to the 30S subunit in the 70S ribosome.

This is one of the proteins that bind and probably mediate the attachment of the 5S RNA into the large ribosomal subunit, where it forms part of the central protuberance. In the 70S ribosome it contacts protein S13 of the 30S subunit (bridge B1b), connecting the 2 subunits; this bridge is implicated in subunit movement. Contacts the P site tRNA; the 5S rRNA and some of its associated proteins might help stabilize positioning of ribosome-bound tRNAs. This chain is Large ribosomal subunit protein uL5, found in Shewanella frigidimarina (strain NCIMB 400).